We begin with the raw amino-acid sequence, 326 residues long: MQTALLKPKIIAVEPLGDHHAKVVMEPFERGYGHTLGNALRRVLLSSMVGYAPTEVTIAGVVHEYSTIDGVQEDVVNLLLNLKGVVFKLHNRDEVTVSLRKEGEGVVTAADIELPHDVEIINPGHVIASLSAGGKLDMQIKVEQGRGYVPGNVRKFGDESSKVIGRIVLDASFAPVRRVSYAVESARVEQRTDLDKLVMNIETNGVISPEEAIRQSARILVDQLSVFAALEGTESAAEAAAARAPQIDPILLRPVDDLELTVRSANCLKAENIYYIGDLIQRTENELLKTPNLGRKSLNEIKEVLASRGLTLGMKLENWPPAGLEK.

The segment at 1 to 231 (MQTALLKPKI…DQLSVFAALE (231 aa)) is alpha N-terminal domain (alpha-NTD). The tract at residues 247-326 (IDPILLRPVD…ENWPPAGLEK (80 aa)) is alpha C-terminal domain (alpha-CTD).

The protein belongs to the RNA polymerase alpha chain family. In terms of assembly, homodimer. The RNAP catalytic core consists of 2 alpha, 1 beta, 1 beta' and 1 omega subunit. When a sigma factor is associated with the core the holoenzyme is formed, which can initiate transcription.

It carries out the reaction RNA(n) + a ribonucleoside 5'-triphosphate = RNA(n+1) + diphosphate. Its function is as follows. DNA-dependent RNA polymerase catalyzes the transcription of DNA into RNA using the four ribonucleoside triphosphates as substrates. This Ralstonia nicotianae (strain ATCC BAA-1114 / GMI1000) (Ralstonia solanacearum) protein is DNA-directed RNA polymerase subunit alpha.